The sequence spans 431 residues: Histidinol dehydrogenase (431 aa).

NAD(+) is bound by residues tyrosine 127, glutamine 189, and asparagine 212. Substrate contacts are provided by serine 237, glutamine 259, and histidine 262. Zn(2+) contacts are provided by glutamine 259 and histidine 262. Residues glutamate 326 and histidine 327 each act as proton acceptor in the active site. The substrate site is built by histidine 327, aspartate 360, glutamate 414, and histidine 419. Aspartate 360 is a binding site for Zn(2+). Zn(2+) is bound at residue histidine 419.

The protein belongs to the histidinol dehydrogenase family. Requires Zn(2+) as cofactor.

It carries out the reaction L-histidinol + 2 NAD(+) + H2O = L-histidine + 2 NADH + 3 H(+). The protein operates within amino-acid biosynthesis; L-histidine biosynthesis; L-histidine from 5-phospho-alpha-D-ribose 1-diphosphate: step 9/9. Its function is as follows. Catalyzes the sequential NAD-dependent oxidations of L-histidinol to L-histidinaldehyde and then to L-histidine. The protein is Histidinol dehydrogenase of Xanthomonas axonopodis pv. citri (strain 306).